The chain runs to 540 residues: Glucose-6-phosphate isomerase (540 aa).

The Proton donor role is filled by Glu350. Residues His381 and Lys503 contribute to the active site.

Belongs to the GPI family.

The protein resides in the cytoplasm. The enzyme catalyses alpha-D-glucose 6-phosphate = beta-D-fructose 6-phosphate. It functions in the pathway carbohydrate biosynthesis; gluconeogenesis. Its pathway is carbohydrate degradation; glycolysis; D-glyceraldehyde 3-phosphate and glycerone phosphate from D-glucose: step 2/4. Functionally, catalyzes the reversible isomerization of glucose-6-phosphate to fructose-6-phosphate. In Paraburkholderia phytofirmans (strain DSM 17436 / LMG 22146 / PsJN) (Burkholderia phytofirmans), this protein is Glucose-6-phosphate isomerase.